The following is a 194-amino-acid chain: Histone H1.0 (194 aa).

Position 1 is an N-acetylmethionine (Met-1). The tract at residues 1–26 (MTENSTSTPAAKPKRAKAAKKSTDHP) is disordered. Thr-2 carries the post-translational modification N-acetylthreonine; in Histone H1.0, N-terminally processed. The H15 domain occupies 24 to 97 (DHPKYSDMIV…GASGSFRLAK (74 aa)). Arg-42 is subject to Citrulline. The tract at residues 86–194 (GVGASGSFRL…SSAKRASKKK (109 aa)) is disordered. Ser-104 is subject to ADP-ribosylserine. The segment covering 105–194 (VAFKKTKKEV…SSAKRASKKK (90 aa)) has biased composition (basic residues).

Belongs to the histone H1/H5 family. In terms of processing, ADP-ribosylated on Ser-104 in response to DNA damage.

The protein resides in the nucleus. The protein localises to the chromosome. Histones H1 are necessary for the condensation of nucleosome chains into higher-order structures. The histones H1.0 are found in cells that are in terminal stages of differentiation or that have low rates of cell division. The polypeptide is Histone H1.0 (H1-0) (Rattus norvegicus (Rat)).